The following is a 217-amino-acid chain: Uracil-DNA glycosylase (217 aa).

Residue Asp-62 is the Proton acceptor of the active site.

Belongs to the uracil-DNA glycosylase (UDG) superfamily. UNG family.

The protein localises to the cytoplasm. It carries out the reaction Hydrolyzes single-stranded DNA or mismatched double-stranded DNA and polynucleotides, releasing free uracil.. Excises uracil residues from the DNA which can arise as a result of misincorporation of dUMP residues by DNA polymerase or due to deamination of cytosine. This chain is Uracil-DNA glycosylase, found in Streptococcus pneumoniae (strain P1031).